A 310-amino-acid chain; its full sequence is Glycine--tRNA ligase alpha subunit (310 aa).

It belongs to the class-II aminoacyl-tRNA synthetase family. Tetramer of two alpha and two beta subunits.

The protein localises to the cytoplasm. It catalyses the reaction tRNA(Gly) + glycine + ATP = glycyl-tRNA(Gly) + AMP + diphosphate. The sequence is that of Glycine--tRNA ligase alpha subunit from Agrobacterium fabrum (strain C58 / ATCC 33970) (Agrobacterium tumefaciens (strain C58)).